The sequence spans 218 residues: Large ribosomal subunit protein mL54 (218 aa).

This sequence belongs to the mitochondrion-specific ribosomal protein mL54 family. Component of the mitochondrial large ribosomal subunit (mt-LSU). Mature N.crassa 74S mitochondrial ribosomes consist of a small (37S) and a large (54S) subunit. The 37S small subunit contains a 16S ribosomal RNA (16S mt-rRNA) and 32 different proteins. The 54S large subunit contains a 23S rRNA (23S mt-rRNA) and 42 different proteins.

It localises to the mitochondrion. Its function is as follows. Component of the mitochondrial ribosome (mitoribosome), a dedicated translation machinery responsible for the synthesis of mitochondrial genome-encoded proteins, including at least some of the essential transmembrane subunits of the mitochondrial respiratory chain. The mitoribosomes are attached to the mitochondrial inner membrane and translation products are cotranslationally integrated into the membrane. The protein is Large ribosomal subunit protein mL54 (mrpl37) of Neurospora crassa (strain ATCC 24698 / 74-OR23-1A / CBS 708.71 / DSM 1257 / FGSC 987).